The chain runs to 545 residues: Chaperonin GroEL 2 (545 aa).

ATP is bound by residues 29–32, 86–90, glycine 413, 479–481, and aspartate 495; these read TLGP, DGTTT, and NAA.

Belongs to the chaperonin (HSP60) family. Forms a cylinder of 14 subunits composed of two heptameric rings stacked back-to-back. Interacts with the co-chaperonin GroES.

It is found in the cytoplasm. It carries out the reaction ATP + H2O + a folded polypeptide = ADP + phosphate + an unfolded polypeptide.. In terms of biological role, together with its co-chaperonin GroES, plays an essential role in assisting protein folding. The GroEL-GroES system forms a nano-cage that allows encapsulation of the non-native substrate proteins and provides a physical environment optimized to promote and accelerate protein folding. This chain is Chaperonin GroEL 2, found in Prochlorococcus marinus (strain AS9601).